The sequence spans 231 residues: Phosphatidylserine decarboxylase proenzyme (231 aa).

The active-site Schiff-base intermediate with substrate; via pyruvic acid is the Ser188. Ser188 is subject to Pyruvic acid (Ser); by autocatalysis.

It belongs to the phosphatidylserine decarboxylase family. PSD-A subfamily. In terms of assembly, heterodimer of a large membrane-associated beta subunit and a small pyruvoyl-containing alpha subunit. Pyruvate is required as a cofactor. Is synthesized initially as an inactive proenzyme. Formation of the active enzyme involves a self-maturation process in which the active site pyruvoyl group is generated from an internal serine residue via an autocatalytic post-translational modification. Two non-identical subunits are generated from the proenzyme in this reaction, and the pyruvate is formed at the N-terminus of the alpha chain, which is derived from the carboxyl end of the proenzyme. The post-translation cleavage follows an unusual pathway, termed non-hydrolytic serinolysis, in which the side chain hydroxyl group of the serine supplies its oxygen atom to form the C-terminus of the beta chain, while the remainder of the serine residue undergoes an oxidative deamination to produce ammonia and the pyruvoyl prosthetic group on the alpha chain.

The protein localises to the cell membrane. It carries out the reaction a 1,2-diacyl-sn-glycero-3-phospho-L-serine + H(+) = a 1,2-diacyl-sn-glycero-3-phosphoethanolamine + CO2. It functions in the pathway phospholipid metabolism; phosphatidylethanolamine biosynthesis; phosphatidylethanolamine from CDP-diacylglycerol: step 2/2. Functionally, catalyzes the formation of phosphatidylethanolamine (PtdEtn) from phosphatidylserine (PtdSer). This is Phosphatidylserine decarboxylase proenzyme from Rickettsia akari (strain Hartford).